The primary structure comprises 122 residues: Flagellar protein FliT (122 aa).

The tract at residues 1–50 (MTSTVEFINRWQRIALLSQSLLELAQRGEWDLLLQQEVSYLQSIETVMEK) is required for homodimerization. Residues 60-98 (IQDMVAGYIKQTLDNEQLLKGLLQQRLDELSSLIGQSTR) form a fliD binding region.

Belongs to the FliT family. As to quaternary structure, homodimer. Interacts with FliD and FlhC.

It localises to the cytoplasm. It is found in the cytosol. In terms of biological role, dual-function protein that regulates the transcription of class 2 flagellar operons and that also acts as an export chaperone for the filament-capping protein FliD. As a transcriptional regulator, acts as an anti-FlhDC factor; it directly binds FlhC, thus inhibiting the binding of the FlhC/FlhD complex to class 2 promoters, resulting in decreased expression of class 2 flagellar operons. As a chaperone, effects FliD transition to the membrane by preventing its premature polymerization, and by directing it to the export apparatus. The sequence is that of Flagellar protein FliT from Salmonella schwarzengrund (strain CVM19633).